A 134-amino-acid chain; its full sequence is Putative integral membrane protein YxzK (134 aa).

The next 4 helical transmembrane spans lie at Val3–Ile23, Ile35–Ile55, Gly58–Ile78, and Leu89–Ala109.

It localises to the cell membrane. The protein is Putative integral membrane protein YxzK (yxzK) of Bacillus subtilis (strain 168).